The following is a 171-amino-acid chain: 3-hydroxydecanoyl-[acyl-carrier-protein] dehydratase (171 aa).

Histidine 70 is a catalytic residue.

It belongs to the thioester dehydratase family. FabA subfamily. Homodimer.

The protein resides in the cytoplasm. The enzyme catalyses a (3R)-hydroxyacyl-[ACP] = a (2E)-enoyl-[ACP] + H2O. The catalysed reaction is (3R)-hydroxydecanoyl-[ACP] = (2E)-decenoyl-[ACP] + H2O. It carries out the reaction (2E)-decenoyl-[ACP] = (3Z)-decenoyl-[ACP]. It participates in lipid metabolism; fatty acid biosynthesis. In terms of biological role, necessary for the introduction of cis unsaturation into fatty acids. Catalyzes the dehydration of (3R)-3-hydroxydecanoyl-ACP to E-(2)-decenoyl-ACP and then its isomerization to Z-(3)-decenoyl-ACP. Can catalyze the dehydratase reaction for beta-hydroxyacyl-ACPs with saturated chain lengths up to 16:0, being most active on intermediate chain length. In Hydrogenovibrio crunogenus (strain DSM 25203 / XCL-2) (Thiomicrospira crunogena), this protein is 3-hydroxydecanoyl-[acyl-carrier-protein] dehydratase.